The sequence spans 476 residues: MTVETFNPKQTTTLETPAKTLEAASADSTATGNRIGFVSLGCPKNLVDSERILTQLRIDGYEVTNSYDNADLVIVNTCGFIDAAVEESLDAVREALEENGKVIVTGCLGAKENQIREVHPDVLEITGPHSYEAVLKHVHKYVPKPEHNPFTSLIPQTGVKLTPKHYAYLKISEGCDNRCTFCIIPALRGDLDSRPAGSVLDEAKRLVESGVQEILVVSQDTSAYGKDKGGRTDFWNGMPVKQDITSLARQLGKMGAWVRLHYIYPYPWVDDLIPLMAEGLILPYLDIPMQHASPRILKMMKRPGRVDRQLEAIQRWREICPDLVIRSTFIVGFPGETEEDFEMLLDFLREARLDRVGCFKYSEVEGAVANTIAELISEDVKEDRYHRFMEVQAEISAERLARFVGRTMDILIDDVDEEGAIGRSFADAPEIDGMVFINGETELEPGMLVRAVITHSDEHDLWAELVDADAEDDIEA.

In terms of domain architecture, MTTase N-terminal spans 33 to 143 (NRIGFVSLGC…VLKHVHKYVP (111 aa)). Positions 42, 78, 107, 175, 179, and 182 each coordinate [4Fe-4S] cluster. The Radical SAM core domain occupies 161 to 398 (LTPKHYAYLK…MEVQAEISAE (238 aa)). The TRAM domain occupies 401 to 467 (ARFVGRTMDI…EHDLWAELVD (67 aa)).

Belongs to the methylthiotransferase family. RimO subfamily. [4Fe-4S] cluster serves as cofactor.

It is found in the cytoplasm. The enzyme catalyses L-aspartate(89)-[ribosomal protein uS12]-hydrogen + (sulfur carrier)-SH + AH2 + 2 S-adenosyl-L-methionine = 3-methylsulfanyl-L-aspartate(89)-[ribosomal protein uS12]-hydrogen + (sulfur carrier)-H + 5'-deoxyadenosine + L-methionine + A + S-adenosyl-L-homocysteine + 2 H(+). Catalyzes the methylthiolation of an aspartic acid residue of ribosomal protein uS12. The protein is Ribosomal protein uS12 methylthiotransferase RimO of Shewanella sp. (strain MR-4).